The sequence spans 377 residues: Nitric oxide reductase FlRd-NAD(+) reductase (377 aa).

It belongs to the FAD-dependent oxidoreductase family. FAD serves as cofactor.

The protein resides in the cytoplasm. It catalyses the reaction 2 reduced [nitric oxide reductase rubredoxin domain] + NAD(+) + H(+) = 2 oxidized [nitric oxide reductase rubredoxin domain] + NADH. It participates in nitrogen metabolism; nitric oxide reduction. One of at least two accessory proteins for anaerobic nitric oxide (NO) reductase. Reduces the rubredoxin moiety of NO reductase. The polypeptide is Nitric oxide reductase FlRd-NAD(+) reductase (Salmonella heidelberg (strain SL476)).